Reading from the N-terminus, the 268-residue chain is Resolvase (268 aa).

The Tyr recombinase domain occupies 47–250; that stretch reads ELPKYLLAPE…FALDVAARHR (204 aa). Catalysis depends on residues R82, K114, H202, R205, and H228. Y237 (O-(3'-phospho-DNA)-tyrosine intermediate) is an active-site residue.

This sequence belongs to the 'phage' integrase family.

Its function is as follows. Acts as a repressor of transcription and as a site-specific resolvase that cleaves at the RfsF site. This is Resolvase (resD) from Escherichia coli (strain K12).